The sequence spans 574 residues: Phosphoenolpyruvate-protein phosphotransferase (574 aa).

The active-site Tele-phosphohistidine intermediate is His-190. Arg-297 and Arg-333 together coordinate phosphoenolpyruvate. Glu-432 and Asp-456 together coordinate Mg(2+). Phosphoenolpyruvate is bound by residues 455–456 (ND) and Arg-466. The Proton donor role is filled by Cys-503.

The protein belongs to the PEP-utilizing enzyme family. In terms of assembly, homodimer. Requires Mg(2+) as cofactor.

The protein localises to the cytoplasm. It catalyses the reaction L-histidyl-[protein] + phosphoenolpyruvate = N(pros)-phospho-L-histidyl-[protein] + pyruvate. In terms of biological role, general (non sugar-specific) component of the phosphoenolpyruvate-dependent sugar phosphotransferase system (sugar PTS). This major carbohydrate active-transport system catalyzes the phosphorylation of incoming sugar substrates concomitantly with their translocation across the cell membrane. Enzyme I transfers the phosphoryl group from phosphoenolpyruvate (PEP) to the phosphoryl carrier protein (HPr). This Latilactobacillus sakei (Lactobacillus sakei) protein is Phosphoenolpyruvate-protein phosphotransferase (ptsI).